The chain runs to 327 residues: tRNA dimethylallyltransferase (327 aa).

An ATP-binding site is contributed by 14–21; it reads GPTASGKT. Substrate is bound at residue 16-21; it reads TASGKT. 2 interaction with substrate tRNA regions span residues 39-42 and 163-167; these read DSAL and QRIQR.

It belongs to the IPP transferase family. In terms of assembly, monomer. Mg(2+) is required as a cofactor.

It catalyses the reaction adenosine(37) in tRNA + dimethylallyl diphosphate = N(6)-dimethylallyladenosine(37) in tRNA + diphosphate. Its function is as follows. Catalyzes the transfer of a dimethylallyl group onto the adenine at position 37 in tRNAs that read codons beginning with uridine, leading to the formation of N6-(dimethylallyl)adenosine (i(6)A). The protein is tRNA dimethylallyltransferase of Xanthomonas axonopodis pv. citri (strain 306).